We begin with the raw amino-acid sequence, 441 residues long: Asparagine--tRNA ligase, mitochondrial (441 aa).

The protein belongs to the class-II aminoacyl-tRNA synthetase family.

It localises to the mitochondrion. The catalysed reaction is tRNA(Asn) + L-asparagine + ATP = L-asparaginyl-tRNA(Asn) + AMP + diphosphate + H(+). This is Asparagine--tRNA ligase, mitochondrial (slm5) from Schizosaccharomyces pombe (strain 972 / ATCC 24843) (Fission yeast).